Consider the following 171-residue polypeptide: Xanthine-guanine phosphoribosyltransferase (171 aa).

5-phospho-alpha-D-ribose 1-diphosphate-binding positions include 51–52 (RG) and 106–114 (DDLVDSGKT). Aspartate 107 contacts Mg(2+). Residues aspartate 110 and isoleucine 153 each coordinate guanine. Xanthine-binding residues include aspartate 110 and isoleucine 153. GMP is bound by residues 110 to 114 (DSGKT) and 152 to 153 (WI).

The protein belongs to the purine/pyrimidine phosphoribosyltransferase family. XGPT subfamily. As to quaternary structure, homotetramer. Mg(2+) serves as cofactor.

It is found in the cell inner membrane. It catalyses the reaction GMP + diphosphate = guanine + 5-phospho-alpha-D-ribose 1-diphosphate. The catalysed reaction is XMP + diphosphate = xanthine + 5-phospho-alpha-D-ribose 1-diphosphate. The enzyme catalyses IMP + diphosphate = hypoxanthine + 5-phospho-alpha-D-ribose 1-diphosphate. It functions in the pathway purine metabolism; GMP biosynthesis via salvage pathway; GMP from guanine: step 1/1. It participates in purine metabolism; XMP biosynthesis via salvage pathway; XMP from xanthine: step 1/1. In terms of biological role, purine salvage pathway enzyme that catalyzes the transfer of the ribosyl-5-phosphate group from 5-phospho-alpha-D-ribose 1-diphosphate (PRPP) to the N9 position of the 6-oxopurines guanine and xanthine to form the corresponding ribonucleotides GMP (guanosine 5'-monophosphate) and XMP (xanthosine 5'-monophosphate), with the release of PPi. To a lesser extent, also acts on hypoxanthine. This is Xanthine-guanine phosphoribosyltransferase from Ruegeria pomeroyi (strain ATCC 700808 / DSM 15171 / DSS-3) (Silicibacter pomeroyi).